Reading from the N-terminus, the 194-residue chain is Peptidyl-tRNA hydrolase (194 aa).

Y17 contacts tRNA. The Proton acceptor role is filled by H22. TRNA-binding residues include F68, N70, and N116.

Belongs to the PTH family. Monomer.

It localises to the cytoplasm. The enzyme catalyses an N-acyl-L-alpha-aminoacyl-tRNA + H2O = an N-acyl-L-amino acid + a tRNA + H(+). Its function is as follows. Hydrolyzes ribosome-free peptidyl-tRNAs (with 1 or more amino acids incorporated), which drop off the ribosome during protein synthesis, or as a result of ribosome stalling. In terms of biological role, catalyzes the release of premature peptidyl moieties from peptidyl-tRNA molecules trapped in stalled 50S ribosomal subunits, and thus maintains levels of free tRNAs and 50S ribosomes. The sequence is that of Peptidyl-tRNA hydrolase from Histophilus somni (strain 129Pt) (Haemophilus somnus).